The sequence spans 136 residues: Large ribosomal subunit protein uL16 (136 aa).

The protein belongs to the universal ribosomal protein uL16 family. As to quaternary structure, part of the 50S ribosomal subunit.

Binds 23S rRNA and is also seen to make contacts with the A and possibly P site tRNAs. The protein is Large ribosomal subunit protein uL16 of Buchnera aphidicola subsp. Cinara cedri (strain Cc).